Here is a 163-residue protein sequence, read N- to C-terminus: Small ribosomal subunit protein bS18c (163 aa).

Disordered regions lie at residues 1-54 (MYTS…PGDR) and 121-163 (ITGP…SSDC). Positions 7–48 (PFHKSKQTFHKSKQTFRKSKQTFRKFKQPFRKPKQPFRRRPR) are enriched in basic residues. Residues 140 to 163 (NSNRNLRNSNQTLRNNNRNLSSDC) are compositionally biased toward low complexity.

Belongs to the bacterial ribosomal protein bS18 family. Part of the 30S ribosomal subunit.

The protein localises to the plastid. Its subcellular location is the chloroplast. This Oryza nivara (Indian wild rice) protein is Small ribosomal subunit protein bS18c.